The sequence spans 324 residues: Glyoxylate/hydroxypyruvate reductase B (324 aa).

Catalysis depends on residues arginine 237 and glutamate 266. The active-site Proton donor is the histidine 285.

It belongs to the D-isomer specific 2-hydroxyacid dehydrogenase family. GhrB subfamily. Homodimer.

It localises to the cytoplasm. The enzyme catalyses glycolate + NADP(+) = glyoxylate + NADPH + H(+). It carries out the reaction (R)-glycerate + NAD(+) = 3-hydroxypyruvate + NADH + H(+). The catalysed reaction is (R)-glycerate + NADP(+) = 3-hydroxypyruvate + NADPH + H(+). Catalyzes the NADPH-dependent reduction of glyoxylate and hydroxypyruvate into glycolate and glycerate, respectively. The polypeptide is Glyoxylate/hydroxypyruvate reductase B (Salmonella paratyphi B (strain ATCC BAA-1250 / SPB7)).